The chain runs to 201 residues: Small ribosomal subunit protein uS5 (201 aa).

Residues 1–28 (MAGPQRRGSGAGGGERRDRKGRDGGASA) are disordered. The segment covering 14–23 (GERRDRKGRD) has biased composition (basic and acidic residues). The S5 DRBM domain maps to 34 to 97 (YVERVVAINR…EEAKKNFFKV (64 aa)).

It belongs to the universal ribosomal protein uS5 family. In terms of assembly, part of the 30S ribosomal subunit. Contacts proteins S4 and S8.

Functionally, with S4 and S12 plays an important role in translational accuracy. In terms of biological role, located at the back of the 30S subunit body where it stabilizes the conformation of the head with respect to the body. In Streptomyces griseus subsp. griseus (strain JCM 4626 / CBS 651.72 / NBRC 13350 / KCC S-0626 / ISP 5235), this protein is Small ribosomal subunit protein uS5.